We begin with the raw amino-acid sequence, 365 residues long: Probable caffeine synthase 5 (365 aa).

Position 18 (Tyr-18) interacts with S-adenosyl-L-homocysteine. A caffeine-binding site is contributed by Thr-25. 6 residues coordinate S-adenosyl-L-homocysteine: Cys-61, Asn-66, Asp-98, Leu-99, Ser-134, and Phe-135. Positions 152, 155, and 156 each coordinate caffeine. The Mg(2+) site is built by Asn-173, Asp-259, Phe-261, and Asn-262. Phe-317 contributes to the caffeine binding site.

Belongs to the methyltransferase superfamily. Type-7 methyltransferase family. It depends on Mg(2+) as a cofactor.

It participates in alkaloid biosynthesis. May be involved in the biosynthesis of caffeine. In Camellia sinensis (Tea plant), this protein is Probable caffeine synthase 5.